The following is a 387-amino-acid chain: Phosphoglycerate kinase (387 aa).

Substrate-binding positions include Asp-21–Asn-23, Arg-36, His-59–Arg-62, Arg-113, and Arg-146. ATP is bound by residues Lys-197, Glu-314, and Gly-340 to Thr-343.

The protein belongs to the phosphoglycerate kinase family. As to quaternary structure, monomer.

The protein localises to the cytoplasm. The catalysed reaction is (2R)-3-phosphoglycerate + ATP = (2R)-3-phospho-glyceroyl phosphate + ADP. It participates in carbohydrate degradation; glycolysis; pyruvate from D-glyceraldehyde 3-phosphate: step 2/5. The protein is Phosphoglycerate kinase of Yersinia pestis bv. Antiqua (strain Antiqua).